Here is a 281-residue protein sequence, read N- to C-terminus: Bifunctional protein FolD 1 (281 aa).

NADP(+) is bound by residues 165-167 (GRS), Ser190, and Ile231.

This sequence belongs to the tetrahydrofolate dehydrogenase/cyclohydrolase family. In terms of assembly, homodimer.

It carries out the reaction (6R)-5,10-methylene-5,6,7,8-tetrahydrofolate + NADP(+) = (6R)-5,10-methenyltetrahydrofolate + NADPH. The catalysed reaction is (6R)-5,10-methenyltetrahydrofolate + H2O = (6R)-10-formyltetrahydrofolate + H(+). It participates in one-carbon metabolism; tetrahydrofolate interconversion. Functionally, catalyzes the oxidation of 5,10-methylenetetrahydrofolate to 5,10-methenyltetrahydrofolate and then the hydrolysis of 5,10-methenyltetrahydrofolate to 10-formyltetrahydrofolate. The sequence is that of Bifunctional protein FolD 1 from Desulfitobacterium hafniense (strain Y51).